Here is a 520-residue protein sequence, read N- to C-terminus: Glucose starvation modulator protein 1 (520 aa).

Positions 20–48 (CVFCHEKHLQCSNERPCKNCVKRGLAHEC) form a DNA-binding region, zn(2)-C6 fungal-type. Residues 376 to 445 (DYEKLSQLNS…FRLFKTVAVG (70 aa)) form the PAS domain.

Belongs to the ERT1/acuK family.

Its subcellular location is the nucleus. Functionally, transcription factor which regulates nonfermentable carbon utilization. The chain is Glucose starvation modulator protein 1 (GSM1) from Scheffersomyces stipitis (strain ATCC 58785 / CBS 6054 / NBRC 10063 / NRRL Y-11545) (Yeast).